The following is a 202-amino-acid chain: LexA repressor (202 aa).

Residues 27–47 constitute a DNA-binding region (H-T-H motif); sequence RAEIAAELGFRSANAAEEHLR. Residues Ser-119 and Lys-156 each act as for autocatalytic cleavage activity in the active site.

This sequence belongs to the peptidase S24 family. As to quaternary structure, homodimer.

The catalysed reaction is Hydrolysis of Ala-|-Gly bond in repressor LexA.. In terms of biological role, represses a number of genes involved in the response to DNA damage (SOS response), including recA and lexA. In the presence of single-stranded DNA, RecA interacts with LexA causing an autocatalytic cleavage which disrupts the DNA-binding part of LexA, leading to derepression of the SOS regulon and eventually DNA repair. The sequence is that of LexA repressor from Marinobacter nauticus (strain ATCC 700491 / DSM 11845 / VT8) (Marinobacter aquaeolei).